The sequence spans 72 residues: DNA-directed RNA polymerase subunit epsilon (72 aa).

It belongs to the RNA polymerase subunit epsilon family. As to quaternary structure, RNAP is composed of a core of 2 alpha, a beta and a beta' subunit. The core is associated with a delta subunit, and at least one of epsilon or omega. When a sigma factor is associated with the core the holoenzyme is formed, which can initiate transcription.

It carries out the reaction RNA(n) + a ribonucleoside 5'-triphosphate = RNA(n+1) + diphosphate. A non-essential component of RNA polymerase (RNAP). The protein is DNA-directed RNA polymerase subunit epsilon of Staphylococcus haemolyticus (strain JCSC1435).